The primary structure comprises 483 residues: Betaine aldehyde dehydrogenase (483 aa).

The K(+) site is built by Ile27 and Asp93. 149-151 (GAW) provides a ligand contact to NAD(+). Lys161 acts as the Charge relay system in catalysis. 175–178 (KPSE) contacts NAD(+). Val179 is a binding site for K(+). Residue 228–231 (SVPT) coordinates NAD(+). A K(+)-binding site is contributed by Val243. Residue Glu249 is the Proton acceptor of the active site. NAD(+)-binding residues include Gly251, Cys283, and Glu380. Cys283 acts as the Nucleophile in catalysis. Position 283 is a cysteine sulfenic acid (-SOH) (Cys283). Residues Lys450 and Gly453 each coordinate K(+). The Charge relay system role is filled by Glu457.

It belongs to the aldehyde dehydrogenase family. Dimer of dimers. K(+) serves as cofactor.

It catalyses the reaction betaine aldehyde + NAD(+) + H2O = glycine betaine + NADH + 2 H(+). It participates in amine and polyamine biosynthesis; betaine biosynthesis via choline pathway; betaine from betaine aldehyde: step 1/1. Its function is as follows. Involved in the biosynthesis of the osmoprotectant glycine betaine. Catalyzes the irreversible oxidation of betaine aldehyde to the corresponding acid. This is Betaine aldehyde dehydrogenase from Cereibacter sphaeroides (strain ATCC 17029 / ATH 2.4.9) (Rhodobacter sphaeroides).